The primary structure comprises 121 residues: Putative RNase MJ0127 (121 aa).

Residues Arg76 and His81 contribute to the active site. Positions 76–83 (RDKLIHHY) match the RX(4)HXY motif motif. At Tyr83 the chain carries O-di-AMP-tyrosine.

This sequence belongs to the HepT RNase toxin family. As to quaternary structure, homodimer, probably forms a complex with cognate antitoxin MJ0128. Modified by cognate antitoxin MJ0128; probably at least 2 successive AMPylation events occur on Tyr-83.

In terms of biological role, probable toxic component of a putative type VII toxin-antitoxin (TA) system, probably an RNase. Probably neutralized by cognate antitoxin MJ0128. Neutralization may be due to AMPylation by MJ0128. The polypeptide is Putative RNase MJ0127 (Methanocaldococcus jannaschii (strain ATCC 43067 / DSM 2661 / JAL-1 / JCM 10045 / NBRC 100440) (Methanococcus jannaschii)).